The following is a 349-amino-acid chain: Methylthioribose-1-phosphate isomerase (349 aa).

Substrate contacts are provided by residues 51-53, Arg-94, and Gln-199; that span reads RGA. Asp-240 serves as the catalytic Proton donor. 250–251 is a substrate binding site; it reads NK.

The protein belongs to the eIF-2B alpha/beta/delta subunits family. MtnA subfamily. Homodimer.

It carries out the reaction 5-(methylsulfanyl)-alpha-D-ribose 1-phosphate = 5-(methylsulfanyl)-D-ribulose 1-phosphate. The protein operates within amino-acid biosynthesis; L-methionine biosynthesis via salvage pathway; L-methionine from S-methyl-5-thio-alpha-D-ribose 1-phosphate: step 1/6. Functionally, catalyzes the interconversion of methylthioribose-1-phosphate (MTR-1-P) into methylthioribulose-1-phosphate (MTRu-1-P). The polypeptide is Methylthioribose-1-phosphate isomerase (Bacillus cytotoxicus (strain DSM 22905 / CIP 110041 / 391-98 / NVH 391-98)).